A 345-amino-acid chain; its full sequence is Platelet-derived growth factor C (345 aa).

Residues 1 to 22 (MLLLGLLLLTSALAGRRHGAAA) form the signal peptide. A CUB domain is found at 46–163 (HEKIITVTSN…PGFCIHYTLL (118 aa)). Asn55 carries an N-linked (GlcNAc...) asparagine glycan. Disulfide bonds link Cys104-Cys124, Cys250-Cys294, Cys280-Cys335, and Cys287-Cys337.

Belongs to the PDGF/VEGF growth factor family. As to quaternary structure, homodimer; disulfide-linked. Interacts with PDGFRA homodimers, and with heterodimers formed by PDGFRA and PDGFRB. In terms of processing, proteolytic removal of the N-terminal CUB domain releasing the core domain is necessary for unmasking the receptor-binding epitopes of the core domain. Cleavage after basic residues in the hinge region (region connecting the CUB and growth factor domains) gives rise to the receptor-binding form.

The protein localises to the secreted. Functionally, growth factor that plays an essential role in the regulation of embryonic development, cell proliferation, cell migration, survival and chemotaxis. Potent mitogen and chemoattractant for cells of mesenchymal origin. Required for normal skeleton formation during embryonic development. Required for normal skin morphogenesis during embryonic development. Plays an important role in wound healing, in angiogenesis and blood vessel development. This Gallus gallus (Chicken) protein is Platelet-derived growth factor C (PDGFC).